Here is a 317-residue protein sequence, read N- to C-terminus: Phosphopantothenate--cysteine ligase 1 (317 aa).

Belongs to the PPC synthetase family. As to quaternary structure, homodimer.

The catalysed reaction is (R)-4'-phosphopantothenate + L-cysteine + ATP = N-[(R)-4-phosphopantothenoyl]-L-cysteine + AMP + diphosphate + H(+). It functions in the pathway cofactor biosynthesis; coenzyme A biosynthesis; CoA from (R)-pantothenate: step 2/5. Catalyzes the first step in the biosynthesis of coenzyme A from vitamin B5/pantothenate, where cysteine is conjugated to 4'-phosphopantothenate to form 4-phosphopantothenoylcysteine. The catalytic activity is not CTP- but ATP-dependent. This Arabidopsis thaliana (Mouse-ear cress) protein is Phosphopantothenate--cysteine ligase 1 (PPCS1).